Here is a 347-residue protein sequence, read N- to C-terminus: Probable replication factor C subunit 3 (347 aa).

Belongs to the activator 1 small subunits family. Heteropentamer of various rfc subunits that forms a complex (RFC) with PCNA in the presence of ATP.

The protein resides in the nucleus. The elongation of primed DNA templates by DNA polymerase delta and epsilon requires the action of the accessory proteins PCNA and activator 1. This chain is Probable replication factor C subunit 3 (rfc3), found in Dictyostelium discoideum (Social amoeba).